A 515-amino-acid chain; its full sequence is Probable malate:quinone oxidoreductase (515 aa).

Belongs to the MQO family. It depends on FAD as a cofactor.

It carries out the reaction (S)-malate + a quinone = a quinol + oxaloacetate. Its pathway is carbohydrate metabolism; tricarboxylic acid cycle; oxaloacetate from (S)-malate (quinone route): step 1/1. The protein is Probable malate:quinone oxidoreductase of Blochmanniella pennsylvanica (strain BPEN).